The following is a 25-amino-acid chain: Bioremediase (25 aa).

The Alpha-carbonic anhydrase domain occupies 1 to 25 (DFPIANGERQSPVDIDTKAVVQDPA). The disordered stretch occupies residues 1 to 25 (DFPIANGERQSPVDIDTKAVVQDPA).

Belongs to the alpha-carbonic anhydrase family. Requires Zn(2+) as cofactor.

Functionally, releases silica from silica-rich substances. In Thermoanaerobacter sp, this protein is Bioremediase.